We begin with the raw amino-acid sequence, 417 residues long: MASYLYGVLFAVGLCAPIYCVSPANAPSAYPRPSSTKSTPASQVYSLNTDFAFRLYRRLVLETPSQNIFFSPVSVSTSLAMLSLGAHSVTKTQILQGLGFNLTHTPESAIHQGFQHLVHSLTVPSKDLTLKMGSALFVKKELQLQANFLGNVKRLYEAEVFSTDFSNPSIAQARINSHVKKKTQGKVVDIIQGLDLLTAMVLVNHIFFKAKWEKPFHPEYTRKNFPFLVGEQVTVHVPMMHQKEQFAFGVDTELNCFVLQMDYKGDAVAFFVLPSKGKMRQLEQALSARTLRKWSHSLQKRWIEVFIPRFSISASYNLETILPKMGIQNVFDKNADFSGIAKRDSLQVSKATHKAVLDVSEEGTEATAATTTKFIVRSKDGPSYFTVSFNRTFLMMITNKATDGILFLGKVENPTKS.

The N-terminal stretch at 1–23 (MASYLYGVLFAVGLCAPIYCVSP) is a signal peptide. Asn101 and Asn390 each carry an N-linked (GlcNAc...) asparagine glycan.

This sequence belongs to the serpin family. As to expression, highly expressed in normal germinal center (GC) B-cells and GC B-cell-derived malignancies.

Its subcellular location is the secreted. It is found in the cytoplasm. It localises to the membrane. Functionally, protease inhibitor that inhibits trypsin and trypsin-like serine proteases (in vitro). Inhibits plasmin and thrombin with lower efficiency (in vitro). This Homo sapiens (Human) protein is Serpin A9 (SERPINA9).